A 270-amino-acid chain; its full sequence is MNLAFRFSYFGDRFFGSQMQPDLCTVEGEFIGACRLLRLFDDWREANFATAGRTDRGVHARSQVCSFLTDKPERAIEALNRVLPADIWCTGWAEAPDGFHPRYSAVSRTYRYYFSAPGDAAAMHEAAQEFLGRHDFSAFARAGDRNPERRILASRVFIDGEFAVFEVTGESFLWNMVRCMATMLGRVGRGEAEAGEIARLLTGPVERRVAAAPPEGLILWDIDYGIPFTPLPIDAGSSRHLGDRHRYHVLMAKISAHLAQDHRQPDTPGI.

D55 serves as the catalytic Nucleophile. Position 110 (Y110) interacts with substrate.

Belongs to the tRNA pseudouridine synthase TruA family.

The catalysed reaction is uridine(38/39/40) in tRNA = pseudouridine(38/39/40) in tRNA. Functionally, formation of pseudouridine at positions 38, 39 and 40 in the anticodon stem and loop of transfer RNAs. The protein is tRNA pseudouridine synthase A of Methanoculleus marisnigri (strain ATCC 35101 / DSM 1498 / JR1).